Here is a 75-residue protein sequence, read N- to C-terminus: UPF0270 protein PSPTO_1630 (75 aa).

This sequence belongs to the UPF0270 family.

The chain is UPF0270 protein PSPTO_1630 from Pseudomonas syringae pv. tomato (strain ATCC BAA-871 / DC3000).